The chain runs to 513 residues: Interferon-induced, double-stranded RNA-activated protein kinase (513 aa).

Ala2 is subject to N-acetylalanine. The region spanning 8-76 is the DRBM 1 domain; the sequence is FYVDKLNKYS…AKLAVEILDN (69 aa). A Glycyl lysine isopeptide (Lys-Gly) (interchain with G-Cter in ISG15) cross-link involves residue Lys68. The residue at position 82 (Ser82) is a Phosphoserine. The residue at position 84 (Thr84) is a Phosphothreonine. The 68-residue stretch at 95-162 folds into the DRBM 2 domain; the sequence is NYIGLVNSFA…AKNAYQKLSE (68 aa). The residue at position 96 (Tyr96) is a Phosphotyrosine; by autocatalysis. Residue Lys154 forms a Glycyl lysine isopeptide (Lys-Gly) (interchain with G-Cter in ISG15) linkage. Tyr157 carries the post-translational modification Phosphotyrosine; by autocatalysis. Phosphothreonine is present on Thr227. The interaction with TRAF5 stretch occupies residues 235–513; that stretch reads DFEDIEEIGS…ISEKKKRNTC (279 aa). Residues 236-502 enclose the Protein kinase domain; sequence FEDIEEIGSG…EILKTLAEWK (267 aa). ATP is bound at residue 242–250; sequence IGSGGFGQV. Tyr262 bears the Phosphotyrosine; by autocatalysis mark. Lys265 contributes to the ATP binding site. Asp373 acts as the Proton acceptor in catalysis. A phosphothreonine; by autocatalysis mark is found at Thr406 and Thr411. Residue Ser416 is modified to Phosphoserine.

Belongs to the protein kinase superfamily. Ser/Thr protein kinase family. GCN2 subfamily. In terms of assembly, homodimer. Interacts with DNAJC3. Interacts with STRBP. Forms a complex with FANCA, FANCC, FANCG and HSP70. Interacts with ADAR/ADAR1. The inactive form interacts with NCK1 and GSN. Interacts (via the kinase catalytic domain) with STAT3 (via SH2 domain), TRAF2 (C-terminus), TRAF5 (C-terminus) and TRAF6 (C-terminus). Interacts with MAP2K6, IKBKB/IKKB, IRS1, NPM1, TARBP2, NLRP1, NLRP3, NLRC4 and AIM2. Interacts (via DRBM 1 domain) with DUS2L (via DRBM domain). Interacts with DHX9 (via N-terminus) and this interaction is dependent upon activation of the kinase. In terms of processing, autophosphorylated on several Ser, Thr and Tyr residues. Autophosphorylation of Thr-411 is dependent on Thr-406 and is stimulated by dsRNA binding and dimerization. Autophosphorylation apparently leads to the activation of the kinase. Tyrosine autophosphorylation is essential for efficient dsRNA-binding, dimerization, and kinase activation.

Its subcellular location is the cytoplasm. The protein localises to the nucleus. It is found in the perinuclear region. It carries out the reaction L-seryl-[protein] + ATP = O-phospho-L-seryl-[protein] + ADP + H(+). The enzyme catalyses L-threonyl-[protein] + ATP = O-phospho-L-threonyl-[protein] + ADP + H(+). It catalyses the reaction L-tyrosyl-[protein] + ATP = O-phospho-L-tyrosyl-[protein] + ADP + H(+). Initially produced in an inactive form and is activated by binding to viral dsRNA, which causes dimerization and autophosphorylation in the activation loop and stimulation of function. ISGylation can activate it in the absence of viral infection. Can also be activated by heparin, pro-inflammatory stimuli, growth factors, cytokines, oxidative stress and the cellular protein PRKRA. Activity is markedly stimulated by manganese ions. Activation is blocked by the cellular proteins TARBP2, DUS2L, NPM1, NCK1 and ADAR. Functionally, IFN-induced dsRNA-dependent serine/threonine-protein kinase that phosphorylates the alpha subunit of eukaryotic translation initiation factor 2 (EIF2S1/eIF-2-alpha) and plays a key role in the innate immune response to viral infection. Inhibits viral replication via the integrated stress response (ISR): EIF2S1/eIF-2-alpha phosphorylation in response to viral infection converts EIF2S1/eIF-2-alpha in a global protein synthesis inhibitor, resulting to a shutdown of cellular and viral protein synthesis, while concomitantly initiating the preferential translation of ISR-specific mRNAs, such as the transcriptional activator ATF4. Exerts its antiviral activity on a wide range of DNA and RNA viruses. Also involved in the regulation of signal transduction, apoptosis, cell proliferation and differentiation: phosphorylates other substrates including p53/TP53, PPP2R5A, DHX9, ILF3 and IRS1. In addition to serine/threonine-protein kinase activity, also has tyrosine-protein kinase activity and phosphorylates CDK1 at 'Tyr-4' upon DNA damage, facilitating its ubiquitination and proteasomal degradation. Either as an adapter protein and/or via its kinase activity, can regulate various signaling pathways (p38 MAP kinase, NF-kappa-B and insulin signaling pathways) and transcription factors (JUN, STAT1, STAT3, IRF1, ATF3) involved in the expression of genes encoding pro-inflammatory cytokines and IFNs. Activates the NF-kappa-B pathway via interaction with IKBKB and TRAF family of proteins and activates the p38 MAP kinase pathway via interaction with MAP2K6. Can act as both a positive and negative regulator of the insulin signaling pathway (ISP). Negatively regulates ISP by inducing the inhibitory phosphorylation of insulin receptor substrate 1 (IRS1) at 'Ser-312' and positively regulates ISP via phosphorylation of PPP2R5A which activates FOXO1, which in turn up-regulates the expression of insulin receptor substrate 2 (IRS2). Can regulate NLRP3 inflammasome assembly and the activation of NLRP3, NLRP1, AIM2 and NLRC4 inflammasomes. Plays a role in the regulation of the cytoskeleton by binding to gelsolin (GSN), sequestering the protein in an inactive conformation away from actin. The polypeptide is Interferon-induced, double-stranded RNA-activated protein kinase (Eif2ak2) (Rattus norvegicus (Rat)).